The primary structure comprises 505 residues: Glycerol kinase (505 aa).

Residue T12 participates in ADP binding. ATP contacts are provided by T12, T13, and S14. T12 contributes to the sn-glycerol 3-phosphate binding site. ADP is bound at residue R16. Residues R82, E83, Y134, and D249 each coordinate sn-glycerol 3-phosphate. Glycerol contacts are provided by R82, E83, Y134, D249, and Q250. ADP is bound by residues T271 and G315. The ATP site is built by T271, G315, Q319, and G416. Residues G416 and N420 each coordinate ADP.

Belongs to the FGGY kinase family.

It catalyses the reaction glycerol + ATP = sn-glycerol 3-phosphate + ADP + H(+). Its pathway is polyol metabolism; glycerol degradation via glycerol kinase pathway; sn-glycerol 3-phosphate from glycerol: step 1/1. Its activity is regulated as follows. Inhibited by fructose 1,6-bisphosphate (FBP). Key enzyme in the regulation of glycerol uptake and metabolism. Catalyzes the phosphorylation of glycerol to yield sn-glycerol 3-phosphate. This chain is Glycerol kinase, found in Mycolicibacterium gilvum (strain PYR-GCK) (Mycobacterium gilvum (strain PYR-GCK)).